Reading from the N-terminus, the 248-residue chain is Small ribosomal subunit protein uS3 (248 aa).

The region spanning 38-106 (IREFLSKGLD…QVALNILEVK (69 aa)) is the KH type-2 domain. The segment covering 214 to 230 (SEINAPAERRGRGDRNA) has biased composition (basic and acidic residues). A disordered region spans residues 214 to 248 (SEINAPAERRGRGDRNARPRRGGQRRQRAEQKQEG).

It belongs to the universal ribosomal protein uS3 family. In terms of assembly, part of the 30S ribosomal subunit. Forms a tight complex with proteins S10 and S14.

Binds the lower part of the 30S subunit head. Binds mRNA in the 70S ribosome, positioning it for translation. The protein is Small ribosomal subunit protein uS3 of Corynebacterium glutamicum (strain R).